Consider the following 337-residue polypeptide: Anthranilate phosphoribosyltransferase (337 aa).

Residues Gly-80, 83–84 (GD), Thr-88, 90–93 (NIST), 108–116 (KHGNRAVSS), and Ser-120 each bind 5-phospho-alpha-D-ribose 1-diphosphate. Gly-80 is a binding site for anthranilate. Ser-92 contributes to the Mg(2+) binding site. Asn-111 is a binding site for anthranilate. Arg-166 lines the anthranilate pocket. Mg(2+)-binding residues include Asp-224 and Glu-225.

Belongs to the anthranilate phosphoribosyltransferase family. In terms of assembly, homodimer. The cofactor is Mg(2+).

It catalyses the reaction N-(5-phospho-beta-D-ribosyl)anthranilate + diphosphate = 5-phospho-alpha-D-ribose 1-diphosphate + anthranilate. It functions in the pathway amino-acid biosynthesis; L-tryptophan biosynthesis; L-tryptophan from chorismate: step 2/5. Catalyzes the transfer of the phosphoribosyl group of 5-phosphorylribose-1-pyrophosphate (PRPP) to anthranilate to yield N-(5'-phosphoribosyl)-anthranilate (PRA). The polypeptide is Anthranilate phosphoribosyltransferase (Anaeromyxobacter sp. (strain K)).